The sequence spans 246 residues: Peroxisomal membrane protein 11A (246 aa).

The Cytoplasmic segment spans residues 1–93 (MDAFIRVANQ…LCLTLANLNR (93 aa)). A helical transmembrane segment spans residues 94-114 (VVYYICDTVLWAKSVGLTSGI). At 115-217 (NREKWQMRAA…LNQLGIYKSN (103 aa)) the chain is on the lumenal side. The helical transmembrane segment at 218–238 (LGVVGFGGLVSSVAGLITVVY) threads the bilayer. Residues 218–238 (LGVVGFGGLVSSVAGLITVVY) are required for homodimerization, interaction with PEX11G, and peroxisomal localization. Residues 239 to 246 (PQLKLKAR) lie on the Cytoplasmic side of the membrane.

Belongs to the peroxin-11 family. Homodimer. Heterodimer with PEX11G. Probably interacts with COPB2 and COPA. Interacts with PEX19. Interacts with FIS1. As to expression, expressed at high levels in kidney, liver, lung, brain, and testis and at low levels in heart, spleen and skeletal muscle.

It is found in the peroxisome membrane. In terms of biological role, may be involved in peroxisomal proliferation and may regulate peroxisomes division. May mediate binding of coatomer proteins to the peroxisomal membrane. Promotes membrane protrusion and elongation on the peroxisomal surface. This chain is Peroxisomal membrane protein 11A (Pex11a), found in Rattus norvegicus (Rat).